The chain runs to 215 residues: Ribonuclease T (215 aa).

The region spanning 20 to 194 is the Exonuclease domain; sequence VVIDVETAGF…YDTERTAVLF (175 aa). Residues aspartate 23, glutamate 25, histidine 181, and aspartate 186 each coordinate Mg(2+). Catalysis depends on histidine 181, which acts as the Proton donor/acceptor.

This sequence belongs to the RNase T family. Homodimer. Requires Mg(2+) as cofactor.

Functionally, trims short 3' overhangs of a variety of RNA species, leaving a one or two nucleotide 3' overhang. Responsible for the end-turnover of tRNA: specifically removes the terminal AMP residue from uncharged tRNA (tRNA-C-C-A). Also appears to be involved in tRNA biosynthesis. This chain is Ribonuclease T, found in Shigella boydii serotype 4 (strain Sb227).